Reading from the N-terminus, the 348-residue chain is Dihydroorotase (348 aa).

2 residues coordinate Zn(2+): histidine 17 and histidine 19. Residues 19–21 (HLR) and asparagine 45 each bind substrate. Zn(2+)-binding residues include lysine 103, histidine 140, and histidine 178. Lysine 103 is subject to N6-carboxylysine. Histidine 140 contacts substrate. Leucine 223 provides a ligand contact to substrate. Residue aspartate 251 participates in Zn(2+) binding. The active site involves aspartate 251. Residues histidine 255 and alanine 267 each contribute to the substrate site.

It belongs to the metallo-dependent hydrolases superfamily. DHOase family. Class II DHOase subfamily. As to quaternary structure, homodimer. The cofactor is Zn(2+).

It catalyses the reaction (S)-dihydroorotate + H2O = N-carbamoyl-L-aspartate + H(+). It functions in the pathway pyrimidine metabolism; UMP biosynthesis via de novo pathway; (S)-dihydroorotate from bicarbonate: step 3/3. Catalyzes the reversible cyclization of carbamoyl aspartate to dihydroorotate. The chain is Dihydroorotase from Salmonella arizonae (strain ATCC BAA-731 / CDC346-86 / RSK2980).